Consider the following 350-residue polypeptide: MKFLDQAKIYVKSGDGGDGVVAFRREKYIEFGGPDGGNGGRGGDIVFEAAGNLNTLIDFRYTQHFRARKGGNGAGSDRTGAAAAPVLIQVPVGTQIFDEDRETMLADLDQPGKRIVLCHGGDGGRGNAHFKTSTNRAPRRADKGWPGEERWIWLRLKLIADVGLVGLPNAGKSTFLSVVSAARPKIADYPFTTLHPQLGVVRLSVAEEFVIADIPGLIEGAHEGAGLGDRFLGHVERCAVLLHLVDGAAGDVVKAWRTIRHELEAYDGGLAAKPEIIALNKIDAMTPQQISSRRRALEKASGMPVVTLSGVTRQNLDDVLRLLQDRVTATREAARDAAPPQAAAGREETA.

Residues 1–159 (MKFLDQAKIY…RWIWLRLKLI (159 aa)) form the Obg domain. Residues 160 to 328 (ADVGLVGLPN…VLRLLQDRVT (169 aa)) form the OBG-type G domain. GTP contacts are provided by residues 166-173 (GLPNAGKS), 191-195 (FTTLH), 213-216 (DIPG), 280-283 (NKID), and 309-311 (SGV). 2 residues coordinate Mg(2+): serine 173 and threonine 193. Residues 331 to 350 (REAARDAAPPQAAAGREETA) are disordered.

It belongs to the TRAFAC class OBG-HflX-like GTPase superfamily. OBG GTPase family. As to quaternary structure, monomer. Requires Mg(2+) as cofactor.

The protein resides in the cytoplasm. In terms of biological role, an essential GTPase which binds GTP, GDP and possibly (p)ppGpp with moderate affinity, with high nucleotide exchange rates and a fairly low GTP hydrolysis rate. Plays a role in control of the cell cycle, stress response, ribosome biogenesis and in those bacteria that undergo differentiation, in morphogenesis control. This chain is GTPase Obg, found in Gluconacetobacter diazotrophicus (strain ATCC 49037 / DSM 5601 / CCUG 37298 / CIP 103539 / LMG 7603 / PAl5).